The primary structure comprises 130 residues: Small ribosomal subunit protein uS9 (130 aa).

It belongs to the universal ribosomal protein uS9 family.

This Phytoplasma australiense protein is Small ribosomal subunit protein uS9.